Consider the following 146-residue polypeptide: Shadow of prion protein (146 aa).

An N-terminal signal peptide occupies residues 1 to 24; that stretch reads MRGTSAVCWSLLLLIALLSQNVTA. Asparagine 94 is a glycosylation site (N-linked (GlcNAc...) asparagine). Residue serine 108 is the site of GPI-anchor amidated serine attachment. A propeptide spans 109–146 (removed in mature form); that stretch reads GTCPLSSHLSFRLIISIGAILTCSSSSIYVSTKINLGK.

The protein belongs to the SPRN family.

It is found in the cell membrane. Its function is as follows. Prion-like protein that has PrP(C)-like neuroprotective activity. This Xenopus tropicalis (Western clawed frog) protein is Shadow of prion protein (sprn).